The sequence spans 313 residues: LUC7-related splicing factor homolog (313 aa).

Residues 237 to 313 are disordered; it reads RKEREEKLGS…RDRRDRDRRY (77 aa).

Belongs to the Luc7 family.

This Caenorhabditis elegans protein is LUC7-related splicing factor homolog.